We begin with the raw amino-acid sequence, 309 residues long: Probable 4-hydroxy-2-oxoglutarate aldolase, mitochondrial (309 aa).

49–50 (SN) lines the substrate pocket. The Schiff-base intermediate with substrate role is filled by K173.

It belongs to the DapA family.

It carries out the reaction (4S)-4-hydroxy-2-oxoglutarate = glyoxylate + pyruvate. The enzyme catalyses (4R)-4-hydroxy-2-oxoglutarate = glyoxylate + pyruvate. Its activity is regulated as follows. Inhibited by divalent cations. In terms of biological role, catalyzes the final step in the metabolic pathway of hydroxyproline. Involved in osmoadaptation. In Emericella nidulans (strain FGSC A4 / ATCC 38163 / CBS 112.46 / NRRL 194 / M139) (Aspergillus nidulans), this protein is Probable 4-hydroxy-2-oxoglutarate aldolase, mitochondrial.